We begin with the raw amino-acid sequence, 947 residues long: Regulator of spindle assembly protein 2 (947 aa).

Disordered stretches follow at residues 20 to 148 (EKPA…LSEQ) and 173 to 211 (SPHE…LKPR). Composition is skewed to basic and acidic residues over residues 30–50 (PKYR…EGEK) and 62–84 (TRED…DLRI). Polar residues-rich tracts occupy residues 90-102 (SATP…SDQY) and 179-188 (QQTIQESSEQ). Residues 276-320 (IIAEEAKKRRNEAEAVRKLIEVETQNAKKRAVIQELKDRIDKLTQ) adopt a coiled-coil conformation. Disordered stretches follow at residues 407-453 (KINP…RRIG), 575-594 (ERES…LEIP), 600-662 (SVTT…GLII), and 681-705 (EQSL…FLLD). Residues 411–422 (SSQLNQQSSSDA) show a composition bias toward low complexity. The span at 430–449 (EASTQMTSRLAESAMTQTSP) shows a compositional bias: polar residues. Residues 563–591 (AGLSHYLEQVKKERESMEAQESESESMEL) adopt a coiled-coil conformation. The segment covering 580 to 590 (EAQESESESME) has biased composition (acidic residues). Residues 645–657 (FEHEIEEHKEPEK) show a composition bias toward basic and acidic residues.

Interacts with phosphatase regulatory subunit rsa-1 and tpxl-1. May interact with spd-5. May interact with sys-1.

The protein resides in the cytoplasm. The protein localises to the cytoskeleton. Its subcellular location is the microtubule organizing center. It localises to the centrosome. Functionally, recruits rsa-1 and, thereby, phosphatase let-92/paa-1 complex to the centrosomes. Recruits sys-1/beta-catenin to mitotic centrosomes during the first embryonic cell divisions. The protein is Regulator of spindle assembly protein 2 of Caenorhabditis elegans.